The following is a 37-amino-acid chain: Natriuretic peptide PNP (37 aa).

Cys14 and Cys30 are disulfide-bonded.

As to expression, expressed by the venom gland.

The protein resides in the secreted. Increases urine flow and decreases blood pressure when administered to rats by intravenous injection. Inhibits thrombin-induced platelet aggregation. Stimulates cGMP production via the natriuretic peptide receptor-A (NPR1). The polypeptide is Natriuretic peptide PNP (Pseudocerastes persicus (Persian horned viper)).